Reading from the N-terminus, the 356-residue chain is tRNA N6-adenosine threonylcarbamoyltransferase (356 aa).

Residues His116 and His120 each coordinate Fe cation. Residues 139 to 143 (IVSGG), Asp174, Gly187, Asp191, and Asn281 each bind substrate. Asp309 provides a ligand contact to Fe cation.

The protein belongs to the KAE1 / TsaD family. The cofactor is Fe(2+).

It is found in the cytoplasm. The enzyme catalyses L-threonylcarbamoyladenylate + adenosine(37) in tRNA = N(6)-L-threonylcarbamoyladenosine(37) in tRNA + AMP + H(+). In terms of biological role, required for the formation of a threonylcarbamoyl group on adenosine at position 37 (t(6)A37) in tRNAs that read codons beginning with adenine. Is involved in the transfer of the threonylcarbamoyl moiety of threonylcarbamoyl-AMP (TC-AMP) to the N6 group of A37, together with TsaE and TsaB. TsaD likely plays a direct catalytic role in this reaction. This is tRNA N6-adenosine threonylcarbamoyltransferase from Frankia casuarinae (strain DSM 45818 / CECT 9043 / HFP020203 / CcI3).